Here is a 255-residue protein sequence, read N- to C-terminus: Thiazole synthase (255 aa).

Lys96 serves as the catalytic Schiff-base intermediate with DXP. 1-deoxy-D-xylulose 5-phosphate contacts are provided by residues Gly157, 184 to 185, and 206 to 207; these read AG and NT.

Belongs to the ThiG family. In terms of assembly, homotetramer. Forms heterodimers with either ThiH or ThiS.

Its subcellular location is the cytoplasm. The catalysed reaction is [ThiS sulfur-carrier protein]-C-terminal-Gly-aminoethanethioate + 2-iminoacetate + 1-deoxy-D-xylulose 5-phosphate = [ThiS sulfur-carrier protein]-C-terminal Gly-Gly + 2-[(2R,5Z)-2-carboxy-4-methylthiazol-5(2H)-ylidene]ethyl phosphate + 2 H2O + H(+). Its pathway is cofactor biosynthesis; thiamine diphosphate biosynthesis. Its function is as follows. Catalyzes the rearrangement of 1-deoxy-D-xylulose 5-phosphate (DXP) to produce the thiazole phosphate moiety of thiamine. Sulfur is provided by the thiocarboxylate moiety of the carrier protein ThiS. In vitro, sulfur can be provided by H(2)S. The sequence is that of Thiazole synthase from Clostridium acetobutylicum (strain ATCC 824 / DSM 792 / JCM 1419 / IAM 19013 / LMG 5710 / NBRC 13948 / NRRL B-527 / VKM B-1787 / 2291 / W).